The chain runs to 427 residues: Peptidase B (427 aa).

Lys-195 and Asp-200 together coordinate Mn(2+). Lys-207 is an active-site residue. Positions 218, 277, and 279 each coordinate Mn(2+). Arg-281 is an active-site residue.

Belongs to the peptidase M17 family. As to quaternary structure, homohexamer. Mn(2+) serves as cofactor.

Its subcellular location is the cytoplasm. The catalysed reaction is Release of an N-terminal amino acid, Xaa, from a peptide or arylamide. Xaa is preferably Glu or Asp but may be other amino acids, including Leu, Met, His, Cys and Gln.. Its function is as follows. Probably plays an important role in intracellular peptide degradation. The sequence is that of Peptidase B from Citrobacter koseri (strain ATCC BAA-895 / CDC 4225-83 / SGSC4696).